A 428-amino-acid polypeptide reads, in one-letter code: Enolase (428 aa).

Residue Gln-163 coordinates (2R)-2-phosphoglycerate. Catalysis depends on Glu-205, which acts as the Proton donor. Asp-242, Glu-285, and Asp-312 together coordinate Mg(2+). (2R)-2-phosphoglycerate-binding residues include Lys-337, Arg-366, Ser-367, and Lys-388. The active-site Proton acceptor is the Lys-337.

It belongs to the enolase family. The cofactor is Mg(2+).

It is found in the cytoplasm. The protein localises to the secreted. Its subcellular location is the cell surface. The catalysed reaction is (2R)-2-phosphoglycerate = phosphoenolpyruvate + H2O. The protein operates within carbohydrate degradation; glycolysis; pyruvate from D-glyceraldehyde 3-phosphate: step 4/5. Catalyzes the reversible conversion of 2-phosphoglycerate (2-PG) into phosphoenolpyruvate (PEP). It is essential for the degradation of carbohydrates via glycolysis. This chain is Enolase, found in Carboxydothermus hydrogenoformans (strain ATCC BAA-161 / DSM 6008 / Z-2901).